Here is a 113-residue protein sequence, read N- to C-terminus: MSQDIYDYANKLERAVRALPEYRKALEAREEIKADEAASQLFDEFVAVQEKLQGLMQTGQLPTETEQADIQALSQKIEANDLLKGYFNAQQALSIYVNDIERIVFAPLKDLAK.

This sequence belongs to the UPF0342 family.

This chain is UPF0342 protein SZO_10960, found in Streptococcus equi subsp. zooepidemicus (strain H70).